The primary structure comprises 917 residues: ABC transporter A family member 12 (917 aa).

6 helical membrane passes run 34–54 (LILV…VLDA), 323–343 (IASL…FPVI), 377–397 (FLTI…AIGL), 409–429 (FVFY…VSSI), 435–455 (TVTV…SFLF), and 508–528 (GEVF…AYYI). The ABC transporter domain occupies 595-832 (ILCDNLKKVY…YGGSYVFTMT (238 aa)). 633 to 640 (GPNGAGKT) provides a ligand contact to ATP.

This sequence belongs to the ABC transporter superfamily. ABCA family. CPR flippase (TC 3.A.1.211) subfamily.

The protein localises to the membrane. This is ABC transporter A family member 12 (ABCA12) from Arabidopsis thaliana (Mouse-ear cress).